Reading from the N-terminus, the 327-residue chain is Probable NAD(P)H-dependent D-xylose reductase xyl1 (327 aa).

The active-site Proton donor is the Tyr-57. His-119 lines the substrate pocket. Residues 173–174, 222–231, and 278–288 each bind NAD(+); these read SN, SSLGPQSFIE, and KSNNPDRLAQN.

It belongs to the aldo/keto reductase family.

The catalysed reaction is xylitol + NAD(+) = D-xylose + NADH + H(+). It catalyses the reaction xylitol + NADP(+) = D-xylose + NADPH + H(+). It functions in the pathway carbohydrate metabolism; D-xylose degradation. Functionally, catalyzes the initial reaction in the xylose utilization pathway by reducing D-xylose into xylitol. Xylose is a major component of hemicelluloses such as xylan. Most fungi utilize D-xylose via three enzymatic reactions, xylose reductase (XR), xylitol dehydrogenase (XDH), and xylulokinase, to form xylulose 5-phosphate, which enters pentose phosphate pathway. This Arthroderma otae (strain ATCC MYA-4605 / CBS 113480) (Microsporum canis) protein is Probable NAD(P)H-dependent D-xylose reductase xyl1 (xyl1).